Reading from the N-terminus, the 200-residue chain is Peptidyl-tRNA hydrolase (200 aa).

Phe16 provides a ligand contact to tRNA. His21 functions as the Proton acceptor in the catalytic mechanism. Residues Phe67, Asn69, and Asn115 each contribute to the tRNA site.

The protein belongs to the PTH family. Monomer.

The protein localises to the cytoplasm. The catalysed reaction is an N-acyl-L-alpha-aminoacyl-tRNA + H2O = an N-acyl-L-amino acid + a tRNA + H(+). In terms of biological role, hydrolyzes ribosome-free peptidyl-tRNAs (with 1 or more amino acids incorporated), which drop off the ribosome during protein synthesis, or as a result of ribosome stalling. Functionally, catalyzes the release of premature peptidyl moieties from peptidyl-tRNA molecules trapped in stalled 50S ribosomal subunits, and thus maintains levels of free tRNAs and 50S ribosomes. The sequence is that of Peptidyl-tRNA hydrolase from Prochlorococcus marinus (strain MIT 9215).